A 154-amino-acid chain; its full sequence is Protein X (154 aa).

The mitochondrial targeting sequence stretch occupies residues 68 to 117 (PCALRFTSARRMETTVNAHQILPKVLHKRTLGLSAMSTTDLEAYFKACLF).

This sequence belongs to the orthohepadnavirus protein X family. As to quaternary structure, may form homodimer. May interact with host CEBPA, CFLAR, CREB1, DDB1, E4F1, HBXIP, HSPD1/HSP60, NFKBIA, POLR2E and SMAD4. Interacts with host SMC5-SMC6 complex and induces its degradation. Interacts with host TRPC4AP; leading to prevent ubiquitination of TRPC4AP. Interacts with host PLSCR1; this interaction promotes ubiquitination and degradation of HBx and impairs HBx-mediated cell proliferation. In terms of processing, a fraction may be phosphorylated in insect cells and HepG2 cells, a human hepatoblastoma cell line. Phosphorylated in vitro by host protein kinase C or mitogen-activated protein kinase. N-acetylated in insect cells.

The protein resides in the host cytoplasm. It localises to the host nucleus. It is found in the host mitochondrion. Its function is as follows. Multifunctional protein that plays a role in silencing host antiviral defenses and promoting viral transcription. Does not seem to be essential for HBV infection. May be directly involved in development of cirrhosis and liver cancer (hepatocellular carcinoma). Most of cytosolic activities involve modulation of cytosolic calcium. The effect on apoptosis is controversial depending on the cell types in which the studies have been conducted. May induce apoptosis by localizing in mitochondria and causing loss of mitochondrial membrane potential. May also modulate apoptosis by binding host CFLAR, a key regulator of the death-inducing signaling complex (DISC). Promotes viral transcription by using the host E3 ubiquitin ligase DDB1 to target the SMC5-SMC6 complex to proteasomal degradation. This host complex would otherwise bind to viral episomal DNA, and prevents its transcription. Moderately stimulates transcription of many different viral and cellular transcription elements. Promoters and enhancers stimulated by HBx contain DNA binding sites for NF-kappa-B, AP-1, AP-2, c-EBP, ATF/CREB, or the calcium-activated factor NF-AT. This Hepatitis B virus genotype E (isolate Cote d'Ivoire/ABI-129/2003) (HBV-E) protein is Protein X.